Here is a 129-residue protein sequence, read N- to C-terminus: Small ribosomal subunit protein uS11 (129 aa).

Belongs to the universal ribosomal protein uS11 family. As to quaternary structure, part of the 30S ribosomal subunit. Interacts with proteins S7 and S18. Binds to IF-3.

Located on the platform of the 30S subunit, it bridges several disparate RNA helices of the 16S rRNA. Forms part of the Shine-Dalgarno cleft in the 70S ribosome. This is Small ribosomal subunit protein uS11 from Sodalis glossinidius (strain morsitans).